The primary structure comprises 199 residues: ATP-dependent Clp protease proteolytic subunit (199 aa).

Ser-98 acts as the Nucleophile in catalysis. His-123 is a catalytic residue.

The protein belongs to the peptidase S14 family. Fourteen ClpP subunits assemble into 2 heptameric rings which stack back to back to give a disk-like structure with a central cavity, resembling the structure of eukaryotic proteasomes.

The protein resides in the cytoplasm. It carries out the reaction Hydrolysis of proteins to small peptides in the presence of ATP and magnesium. alpha-casein is the usual test substrate. In the absence of ATP, only oligopeptides shorter than five residues are hydrolyzed (such as succinyl-Leu-Tyr-|-NHMec, and Leu-Tyr-Leu-|-Tyr-Trp, in which cleavage of the -Tyr-|-Leu- and -Tyr-|-Trp bonds also occurs).. In terms of biological role, cleaves peptides in various proteins in a process that requires ATP hydrolysis. Has a chymotrypsin-like activity. Plays a major role in the degradation of misfolded proteins. This chain is ATP-dependent Clp protease proteolytic subunit, found in Clostridium botulinum (strain Eklund 17B / Type B).